The following is a 202-amino-acid chain: Mitochondrial import receptor subunit TOM20-3 (202 aa).

At Met1 the chain carries N-acetylmethionine. At 1-174 the chain is on the cytoplasmic side; it reads MDTETEFDRI…NKKSSDAKYD (174 aa). TPR repeat units follow at residues 38–74 and 86–119; these read GGVL…DPKK and TSFA…QPDN. Positions 146 to 166 are disordered; it reads SQPMGRVEAPAPPSSKAVKNK. The helical transmembrane segment at 175–192 threads the bilayer; that stretch reads AMGWVILAIGVVAWISFA. The Mitochondrial intermembrane segment spans residues 193–202; the sequence is KANVPVSPPR.

This sequence belongs to the Tom20 family. Forms part of the preprotein translocase complex of the outer mitochondrial membrane (TOM complex) which consists of at least 6 different proteins (TOM5, TOM6, TOM7, TOM20, TOM22/TOM9 and TOM40). Component of a mitochondrial large protein complex that contains, at least, MIC60, DGS1, TOM40, TOM20 proteins, and petC/RISP. In terms of processing, the N-terminus is blocked. Expressed in roots, flowers, young cotyledons and leaves.

Its subcellular location is the mitochondrion outer membrane. Central component of the receptor complex responsible for the recognition and translocation of cytosolically synthesized mitochondrial preproteins. Together with TOM22 functions as the transit peptide receptor at the surface of the mitochondrion outer membrane and facilitates the movement of preproteins into the translocation pore. The sequence is that of Mitochondrial import receptor subunit TOM20-3 from Arabidopsis thaliana (Mouse-ear cress).